The following is a 668-amino-acid chain: MAP kinase kinase PBS2 (668 aa).

The span at 1–15 (MEDKFANLSLHEKTG) shows a compositional bias: basic and acidic residues. 3 disordered regions span residues 1-43 (MEDK…SSHY), 61-120 (RALK…ASSK), and 181-313 (NPNR…GSSG). Composition is skewed to polar residues over residues 16-43 (KSSIQLNEQTGSDNGSAVKRTSSTSSHY), 68-91 (SVGSNQSEQDKGSSQSPKHIQQIV), and 104-120 (SKVSQRMSSQVVQASSK). Position 68 is a phosphoserine (Ser68). Positions 239-250 (AQQPQQFAPSPS) are enriched in low complexity. Phosphoserine is present on Ser269. Residues 270–300 (NPGSLINGVQSTSTSSSTEGPHDTVGTTPRT) show a composition bias toward polar residues. Residues 301-310 (GNSNNSSNSG) are compositionally biased toward low complexity. One can recognise a Protein kinase domain in the interval 360–623 (LEFLDELGHG…YAALTEHPWL (264 aa)). Residues 366-374 (LGHGNYGNV) and Lys389 contribute to the ATP site. The active-site Proton acceptor is Asp485. Residue Ser514 is modified to Phosphoserine. Thr518 is subject to Phosphothreonine.

It belongs to the protein kinase superfamily. STE Ser/Thr protein kinase family. MAP kinase kinase subfamily. As to quaternary structure, interacts with NBP2, PTC1, SHO1 and STE11. In terms of processing, activated by phosphorylation by SSK2 or SSK22. Ser/Thr phosphorylation is also necessary for SHO1-mediated activation.

It is found in the cytoplasm. The catalysed reaction is L-seryl-[protein] + ATP = O-phospho-L-seryl-[protein] + ADP + H(+). The enzyme catalyses L-threonyl-[protein] + ATP = O-phospho-L-threonyl-[protein] + ADP + H(+). It carries out the reaction L-tyrosyl-[protein] + ATP = O-phospho-L-tyrosyl-[protein] + ADP + H(+). Its function is as follows. Kinase involved in a signal transduction pathway that is activated by changes in the osmolarity of the extracellular environment. Activates the MAP kinase HOG1 by concomitant phosphorylation at 'Thr-174' and 'Tyr-176'. This is MAP kinase kinase PBS2 (PBS2) from Saccharomyces cerevisiae (strain ATCC 204508 / S288c) (Baker's yeast).